The sequence spans 86 residues: UPF0125 protein bbp_234 (86 aa).

This sequence belongs to the UPF0125 (RnfH) family.

The sequence is that of UPF0125 protein bbp_234 from Buchnera aphidicola subsp. Baizongia pistaciae (strain Bp).